The primary structure comprises 489 residues: Betaine aldehyde dehydrogenase (489 aa).

K(+) is bound by residues Thr26 and Asp93. Residue 150 to 152 (GAW) participates in NAD(+) binding. Lys162 serves as the catalytic Charge relay system. 176-179 (KPSE) provides a ligand contact to NAD(+). Val180 contributes to the K(+) binding site. 229–232 (GVET) contacts NAD(+). Leu245 is a binding site for K(+). Glu251 acts as the Proton acceptor in catalysis. Positions 253, 285, and 386 each coordinate NAD(+). Cys285 functions as the Nucleophile in the catalytic mechanism. Cys285 carries the post-translational modification Cysteine sulfenic acid (-SOH). K(+) is bound by residues Lys456 and Gly459. Glu463 functions as the Charge relay system in the catalytic mechanism.

The protein belongs to the aldehyde dehydrogenase family. As to quaternary structure, dimer of dimers. Requires K(+) as cofactor.

The catalysed reaction is betaine aldehyde + NAD(+) + H2O = glycine betaine + NADH + 2 H(+). It participates in amine and polyamine biosynthesis; betaine biosynthesis via choline pathway; betaine from betaine aldehyde: step 1/1. Functionally, involved in the biosynthesis of the osmoprotectant glycine betaine. Catalyzes the irreversible oxidation of betaine aldehyde to the corresponding acid. This Burkholderia lata (strain ATCC 17760 / DSM 23089 / LMG 22485 / NCIMB 9086 / R18194 / 383) protein is Betaine aldehyde dehydrogenase.